Reading from the N-terminus, the 421-residue chain is MASFPPRVNEKEIVRSRTIGELLAPAAPFDKKCGGENWTVAFAPDGSYFAWSQGYRIVKLVPWSQCRKNFLLHGSKNVTNSSCLKLARQNSNGGQKNKPPEHVIDCGDIVWSLAFGSSVPEKQSRCVNIEWHRFRFGQDQLLLATGLNNGRIKIWDVYTGKLLLNLVDHIEMVRDLTFAPDGSLLLVSASRDKTLRVWDLKDDGNMVKVLRAHQNWVYSCAFSPDCSMLCSVGASKAVFLWNMDKYTMIRKLEGHHHDVVACDFSPDGALLATASYDTRVYVWDPHNGDLLMEFGHLFPSPTPIFAGGANDRWVRAVSFSHDGLHVASLADDKMVRFWRIDEDCPVQVAPLSNGLCCAFSTDGSVLAAGTHDGSVYFWATPRQVPSLQHICRMSIRRVMSTQEVQKLPVPSKILAFLSYRG.

5 WD repeats span residues 124–165, 168–208, 212–251, 254–293, and 309–346; these read SRCV…LLLN, DHIE…NMVK, AHQN…MIRK, GHHH…LLME, and ANDR…DCPV. Positions 372–421 constitute an SOCS box domain; the sequence is DGSVYFWATPRQVPSLQHICRMSIRRVMSTQEVQKLPVPSKILAFLSYRG.

As to quaternary structure, interacts with DIO2. Component of the probable ECS(WSB1) E3 ubiquitin-protein ligase complex which contains CUL5, RNF7/RBX2, Elongin BC complex and WSB1. Component of a probable ECS-like E3 ubiquitin-protein ligase complex which contains CUL5, RBX1, Elongin BC complex and WSB1. Interacts with CUL5, RNF7, ELOB and ELOC. Binds to HIPK2 through WD40 repeats.

Its pathway is protein modification; protein ubiquitination. In terms of biological role, probable substrate-recognition component of a SCF-like ECS (Elongin-Cullin-SOCS-box protein) E3 ubiquitin ligase complex which mediates the ubiquitination and subsequent proteasomal degradation of target proteins. Recognizes type II iodothyronine deiodinase/DIO2. Confers constitutive instability to HIPK2 through proteasomal degradation. This Mus musculus (Mouse) protein is WD repeat and SOCS box-containing protein 1 (Wsb1).